A 195-amino-acid chain; its full sequence is Imidazoleglycerol-phosphate dehydratase (195 aa).

It belongs to the imidazoleglycerol-phosphate dehydratase family.

The protein resides in the cytoplasm. The enzyme catalyses D-erythro-1-(imidazol-4-yl)glycerol 3-phosphate = 3-(imidazol-4-yl)-2-oxopropyl phosphate + H2O. It participates in amino-acid biosynthesis; L-histidine biosynthesis; L-histidine from 5-phospho-alpha-D-ribose 1-diphosphate: step 6/9. The polypeptide is Imidazoleglycerol-phosphate dehydratase (Geobacter metallireducens (strain ATCC 53774 / DSM 7210 / GS-15)).